The following is a 4114-amino-acid chain: Ferrichrome siderophore peptide synthetase (4114 aa).

4 Carrier domains span residues 797–874, 1947–2021, 3020–3093, and 3574–3650; these read DPAT…QSSG, TDSE…IDKL, TQSE…MQSS, and QALS…SQTN. Residues Ser-835, Ser-1982, Ser-3054, and Ser-3611 each carry the O-(pantetheine 4'-phosphoryl)serine modification. The segment at 4040-4061 is disordered; sequence LDYSHHSQHSTHDRTPPSTPHV. The span at 4041-4054 shows a compositional bias: basic and acidic residues; that stretch reads DYSHHSQHSTHDRT.

Belongs to the ATP-dependent AMP-binding enzyme family. It depends on pantetheine 4'-phosphate as a cofactor.

Its pathway is siderophore biosynthesis; ferrichrome biosynthesis. Multidomain peptide synthetase involved in ferrichrome biosynthesis. The polypeptide is Ferrichrome siderophore peptide synthetase (SID2) (Mycosarcoma maydis (Corn smut fungus)).